The primary structure comprises 621 residues: Endoglucanase 25 (621 aa).

The disordered stretch occupies residues 1–26 (MYGRDPWGGPLEINTADSATDDDRSR). Residues 1–70 (MYGRDPWGGP…DLGCIIVSRK (70 aa)) lie on the Cytoplasmic side of the membrane. Positions 48 to 49 (LL) are polarized targeting signal 1 (PTS1). The segment at 59-62 (YVDL) is polarized targeting signal 2 (PTS2). The helical; Signal-anchor for type II membrane protein transmembrane segment at 71 to 91 (IFVWTVGTLVAAALLAGFITL) threads the bilayer. The Extracellular segment spans residues 92–621 (IVKTVPRHHP…PPPPPAPWKP (530 aa)). Residues Asn-108 and Asn-133 are each glycosylated (N-linked (GlcNAc...) asparagine). Asp-165 serves as the catalytic Nucleophile. N-linked (GlcNAc...) asparagine glycosylation is found at Asn-216, Asn-324, Asn-345, Asn-408, and Asn-425. Active-site residues include His-513 and Asp-561. Asn-567 carries an N-linked (GlcNAc...) asparagine glycan. The active site involves Glu-570.

Belongs to the glycosyl hydrolase 9 (cellulase E) family. In terms of processing, glycosylated. N-glycosylation of KOR in the endoplasmic reticulum followed by N-glycan modifications in the Golgi are essential for catalytic activity. As to expression, highly expressed in roots and stems, at intermediate levels in leaves and flowers, and at lower levels in siliques. Expressed in xylem (at protein level).

Its subcellular location is the cell membrane. It carries out the reaction Endohydrolysis of (1-&gt;4)-beta-D-glucosidic linkages in cellulose, lichenin and cereal beta-D-glucans.. In terms of biological role, required for cellulose microfibril formation. Involved in cell wall assembly during cell elongation and cell plate maturation in cytokinesis. Required for secondary cell wall formation in the developing xylem. May cycle through different intracellular compartments, including plasma membrane. The polypeptide is Endoglucanase 25 (KOR) (Arabidopsis thaliana (Mouse-ear cress)).